A 271-amino-acid chain; its full sequence is 4-hydroxy-tetrahydrodipicolinate reductase (271 aa).

Residues 12–17 and Glu38 each bind NAD(+); that span reads GGSGRM. Arg39 serves as a coordination point for NADP(+). Residues 102–104 and 126–129 each bind NAD(+); these read GTT and APNM. The active-site Proton donor/acceptor is His159. Position 160 (His160) interacts with (S)-2,3,4,5-tetrahydrodipicolinate. Lys163 acts as the Proton donor in catalysis. 169–170 lines the (S)-2,3,4,5-tetrahydrodipicolinate pocket; the sequence is GT.

The protein belongs to the DapB family.

Its subcellular location is the cytoplasm. It catalyses the reaction (S)-2,3,4,5-tetrahydrodipicolinate + NAD(+) + H2O = (2S,4S)-4-hydroxy-2,3,4,5-tetrahydrodipicolinate + NADH + H(+). It carries out the reaction (S)-2,3,4,5-tetrahydrodipicolinate + NADP(+) + H2O = (2S,4S)-4-hydroxy-2,3,4,5-tetrahydrodipicolinate + NADPH + H(+). It functions in the pathway amino-acid biosynthesis; L-lysine biosynthesis via DAP pathway; (S)-tetrahydrodipicolinate from L-aspartate: step 4/4. In terms of biological role, catalyzes the conversion of 4-hydroxy-tetrahydrodipicolinate (HTPA) to tetrahydrodipicolinate. This chain is 4-hydroxy-tetrahydrodipicolinate reductase, found in Shewanella sediminis (strain HAW-EB3).